The primary structure comprises 24 residues: Humanin-like 9 (24 aa).

The protein belongs to the humanin family. As to expression, highly expressed in the kidney, heart muscle and testis.

It localises to the secreted. The protein localises to the cytoplasm. Plays a role as a neuroprotective and antiapoptotic factor. This chain is Humanin-like 9, found in Homo sapiens (Human).